Here is a 177-residue protein sequence, read N- to C-terminus: Transmembrane protein 275 (177 aa).

Residues 1-20 (MPQAKKSTETLAPAPPGRSR) are disordered. Transmembrane regions (helical) follow at residues 36–56 (GLCVLLAGLNVTLVGAFAAFL) and 63–83 (LVVGPALLVLALGFFAACCVC). The segment at 113–177 (ESSERTAQDT…LNFPRDPAAS (65 aa)) is disordered. A compositionally biased stretch (low complexity) spans 128–161 (SPAASAASSGRSSPGPGLFALDPPAPATAAPYLP).

The protein resides in the membrane. The polypeptide is Transmembrane protein 275 (Mus musculus (Mouse)).